A 224-amino-acid chain; its full sequence is Imidazoleglycerol-phosphate dehydratase (224 aa).

Belongs to the imidazoleglycerol-phosphate dehydratase family.

The catalysed reaction is D-erythro-1-(imidazol-4-yl)glycerol 3-phosphate = 3-(imidazol-4-yl)-2-oxopropyl phosphate + H2O. The protein operates within amino-acid biosynthesis; L-histidine biosynthesis; L-histidine from 5-phospho-alpha-D-ribose 1-diphosphate: step 6/9. The protein is Imidazoleglycerol-phosphate dehydratase (HIS3) of Komagataella pastoris (Yeast).